A 384-amino-acid chain; its full sequence is Protein RecA (384 aa).

ATP is bound at residue 76 to 83 (GPESSGKT). Residues 346 to 365 (QGSAEPEKAAKPEKVEKADK) are disordered. The segment covering 350-365 (EPEKAAKPEKVEKADK) has biased composition (basic and acidic residues).

It belongs to the RecA family.

The protein localises to the cytoplasm. Functionally, can catalyze the hydrolysis of ATP in the presence of single-stranded DNA, the ATP-dependent uptake of single-stranded DNA by duplex DNA, and the ATP-dependent hybridization of homologous single-stranded DNAs. It interacts with LexA causing its activation and leading to its autocatalytic cleavage. The protein is Protein RecA of Polaromonas naphthalenivorans (strain CJ2).